The sequence spans 206 residues: Large ribosomal subunit protein uL4 (206 aa).

A disordered region spans residues 46–95 (GNRAQKTRAEVKHSTKKPWRQKGTGRARSGMTSSPLWRKGGRAFPNKPDE). Over residues 59-70 (STKKPWRQKGTG) the composition is skewed to basic residues.

It belongs to the universal ribosomal protein uL4 family. In terms of assembly, part of the 50S ribosomal subunit.

Functionally, one of the primary rRNA binding proteins, this protein initially binds near the 5'-end of the 23S rRNA. It is important during the early stages of 50S assembly. It makes multiple contacts with different domains of the 23S rRNA in the assembled 50S subunit and ribosome. Forms part of the polypeptide exit tunnel. This chain is Large ribosomal subunit protein uL4, found in Neisseria meningitidis serogroup C (strain 053442).